The following is a 135-amino-acid chain: DNA-directed RNA polymerase subunit omega (135 aa).

Positions 107 to 135 (ASQESQDYEVDGEIDDEINDQDGDEEVSV) are disordered. The segment covering 112-135 (QDYEVDGEIDDEINDQDGDEEVSV) has biased composition (acidic residues).

The protein belongs to the RNA polymerase subunit omega family. In terms of assembly, the RNAP catalytic core consists of 2 alpha, 1 beta, 1 beta' and 1 omega subunit. When a sigma factor is associated with the core the holoenzyme is formed, which can initiate transcription.

The catalysed reaction is RNA(n) + a ribonucleoside 5'-triphosphate = RNA(n+1) + diphosphate. In terms of biological role, promotes RNA polymerase assembly. Latches the N- and C-terminal regions of the beta' subunit thereby facilitating its interaction with the beta and alpha subunits. The protein is DNA-directed RNA polymerase subunit omega of Wolbachia pipientis wMel.